Reading from the N-terminus, the 504-residue chain is Histidine ammonia-lyase (504 aa).

The 5-imidazolinone (Ala-Gly) cross-link spans 142–144 (ASG). Ser-143 is modified (2,3-didehydroalanine (Ser)).

Belongs to the PAL/histidase family. Contains an active site 4-methylidene-imidazol-5-one (MIO), which is formed autocatalytically by cyclization and dehydration of residues Ala-Ser-Gly.

It localises to the cytoplasm. The enzyme catalyses L-histidine = trans-urocanate + NH4(+). The protein operates within amino-acid degradation; L-histidine degradation into L-glutamate; N-formimidoyl-L-glutamate from L-histidine: step 1/3. The sequence is that of Histidine ammonia-lyase from Staphylococcus aureus (strain bovine RF122 / ET3-1).